Reading from the N-terminus, the 177-residue chain is Crossover junction endodeoxyribonuclease RuvC (177 aa).

Active-site residues include aspartate 7, glutamate 68, and aspartate 141. Mg(2+) is bound by residues aspartate 7, glutamate 68, and aspartate 141.

The protein belongs to the RuvC family. Homodimer which binds Holliday junction (HJ) DNA. The HJ becomes 2-fold symmetrical on binding to RuvC with unstacked arms; it has a different conformation from HJ DNA in complex with RuvA. In the full resolvosome a probable DNA-RuvA(4)-RuvB(12)-RuvC(2) complex forms which resolves the HJ. The cofactor is Mg(2+).

It is found in the cytoplasm. It catalyses the reaction Endonucleolytic cleavage at a junction such as a reciprocal single-stranded crossover between two homologous DNA duplexes (Holliday junction).. Functionally, the RuvA-RuvB-RuvC complex processes Holliday junction (HJ) DNA during genetic recombination and DNA repair. Endonuclease that resolves HJ intermediates. Cleaves cruciform DNA by making single-stranded nicks across the HJ at symmetrical positions within the homologous arms, yielding a 5'-phosphate and a 3'-hydroxyl group; requires a central core of homology in the junction. The consensus cleavage sequence is 5'-(A/T)TT(C/G)-3'. Cleavage occurs on the 3'-side of the TT dinucleotide at the point of strand exchange. HJ branch migration catalyzed by RuvA-RuvB allows RuvC to scan DNA until it finds its consensus sequence, where it cleaves and resolves the cruciform DNA. The chain is Crossover junction endodeoxyribonuclease RuvC from Nocardioides sp. (strain ATCC BAA-499 / JS614).